Reading from the N-terminus, the 279-residue chain is Histone chaperone ASF1 (279 aa).

The interval 1 to 143 is interaction with HIR1; the sequence is MSIVSLLGIK…HIVRNILAEK (143 aa). Positions 1–155 are interaction with histone H3, histone H4, RAD53 and the RF-C complex; that stretch reads MSIVSLLGIK…VTRFNIVWDN (155 aa). The disordered stretch occupies residues 156–279; the sequence is ENEGDLYPPE…TPKDAARSTN (124 aa). Over residues 168–244 the composition is skewed to acidic residues; sequence GVDDEEEEDD…DEEEGEEEVG (77 aa). Residues 192-243 are a coiled coil; it reads DDQEDGEGEAEEAAEEEEEEEEKTEDNETNLEEEEEDIENSDGDEEEGEEEV. Basic and acidic residues-rich tracts occupy residues 245–254 and 269–279; these read SVDKNEDGND and STPKDAARSTN.

It belongs to the ASF1 family. In terms of assembly, interacts with histone H3/H4 heterodimers via both histone H3 and histone H4. Binds with higher affinity to H3/H4 heterodimers where histone H3 has been pre-acetylated on 'Lys-14'. Interacts with RAD53 and this may impair interaction with histones and chromatin assembly; the interaction is reduced upon activation of DNA damage or replication checkpoints which in turn promotes histone binding and chromatin assembly. Interacts with the CAC2 subunit of chromatin assembly factor 1 (CAF-1). Interacts with the HIR1, HIR2, HIR3 and HPC2 subunits of the HIR complex. Interacts with the RFC1, RFC2, RFC3, RFC4 and RFC5 subunits of the replication factor C (RF-C/RFC) complex; which may recruit this protein to DNA. Interacts with the SAS2, SAS4 and SAS5 subunits of the SAS/SAS-I complex. Interacts with the BDF1, BDF2, SPT15, TAF1 and TAF7 subunits of the TFIID complex. Interacts with RTT109 and VPS75; the interaction with RTT109 is direct.

It localises to the nucleus. In terms of biological role, histone chaperone that facilitates histone deposition and histone exchange and removal during nucleosome assembly and disassembly. Facilitates histone deposition through both replication-dependent and replication-independent chromatin assembly pathways. Cooperates with chromatin assembly factor 1 (CAF-1) to promote replication-dependent chromatin assembly and with the HIR complex to promote replication-independent chromatin assembly, which may occur during transcription and DNA repair. May be required for the maintenance of a subset of replication elongation factors, including DNA polymerase epsilon, the RFC complex and PCNA, at stalled replication forks. Also required for RTT109-dependent acetylation of histone H3 on 'Lys-9' and 'Lys-56'. Promotion of RTT109-mediated histone H3 'Lys-56' acetylation is dependent on interactions with histone H3 pre-acetylated on 'Lys-14'. This chain is Histone chaperone ASF1, found in Saccharomyces cerevisiae (strain ATCC 204508 / S288c) (Baker's yeast).